The following is a 664-amino-acid chain: Transmembrane protein 201 (664 aa).

Methionine 1 is subject to N-acetylmethionine. Residues 1–214 (MEGVSALLAS…SSSAVKAPFQ (214 aa)) lie on the Nuclear side of the membrane. The helical transmembrane segment at 215 to 235 (VILLRALAFLACAFLLFTTLY) threads the bilayer. Over 236–297 (GPSEPFTPGA…EAWAFGQSHQ (62 aa)) the chain is Perinuclear space. Low complexity predominate over residues 245–261 (AALPPALPPGGNSSAAS). Positions 245 to 264 (AALPPALPPGGNSSAASDNT) are disordered. Residues 298–318 (TSIVAVGLLTCLLAMLLAGRI) traverse the membrane as a helical segment. Residues 319–322 (RLRR) lie on the Nuclear side of the membrane. A helical membrane pass occupies residues 323 to 343 (IDAFSTCLWALLLGLHLAEHY). The Perinuclear space portion of the chain corresponds to 344-356 (LQAASPGWLDTLK). A helical membrane pass occupies residues 357–374 (FSTTSLCCLVGFTAAVAT). At 375 to 642 (RKSTGPRRFR…ARVSPSLVRG (268 aa)) the chain is on the nuclear side. Serine 441, serine 444, serine 450, serine 454, serine 466, serine 477, and serine 480 each carry phosphoserine. The tract at residues 502-522 (PLPSPAPSVASSVASSSGSLR) is disordered. Residues 508 to 520 (PSVASSVASSSGS) show a composition bias toward low complexity. Serine 529 carries the post-translational modification Phosphoserine. Residues 544–629 (SSPGEAPNTP…TTKGCSEETT (86 aa)) are disordered. 2 stretches are compositionally biased toward basic and acidic residues: residues 578-587 (HTRDTKHTME) and 595-608 (DSAR…KEDE). Positions 610-628 (SQSSTCVVDTTTKGCSEET) are enriched in polar residues. The helical transmembrane segment at 643–663 (LLAVSLAVNALFTSAYLYQSL) threads the bilayer. Residue arginine 664 is a topological domain, perinuclear space.

It belongs to the TMEM201 family. As to quaternary structure, isoform 2 interacts with EMD. Isoform 3 interacts with SUN2 and LMNA. May bind to Ran GTPase; has a greater affinity for Ran-GTP over Ran-GDP.

The protein resides in the nucleus inner membrane. Critical regulator of angiogenesis and endothelial cell (EC) migration. Promotes the migration of endothelial cells, which is essential for angiogenesis. Interacts with the linker of nucleoskeleton and cytoskeleton (LINC) complex, which plays a vital role in connecting the cell's cytoskeleton to the nuclear envelope. This interaction is essential for maintaining cellular structure and facilitating the movement of endothelial cells, which is critical for proper vascular development. Involved in nuclear movement during fibroblast polarization and migration. May recruit Ran GTPase to the nuclear periphery. Its function is as follows. May define a distinct membrane domain in the vicinity of the mitotic spindle. Involved in the organization of the nuclear envelope implicating EMD, SUN1 and A-type lamina. In terms of biological role, proposed to be involved in actin-dependent nuclear movement; via SUN2 associates with transmembrane actin-associated nuclear (TAN) lines which are bound to F-actin cables and couple the nucleus to retrograde actin flow. The polypeptide is Transmembrane protein 201 (Tmem201) (Mus musculus (Mouse)).